We begin with the raw amino-acid sequence, 794 residues long: Sucrose synthase (794 aa).

Residues 263-742 (MISRLLILSP…ALDRVASRYT (480 aa)) form a GT-B glycosyltransferase region.

The protein belongs to the glycosyltransferase 1 family. Homotetramer.

The enzyme catalyses an NDP-alpha-D-glucose + D-fructose = a ribonucleoside 5'-diphosphate + sucrose + H(+). It catalyses the reaction ADP-alpha-D-glucose + D-fructose = sucrose + ADP + H(+). Inhibited by GDP over 10 mM and by over 2 mM MgCl(2). Catalyzes the reversible conversion of sucrose and a nucleotide disphosphate (NDP) into fructose and NDP-glucose; although the reaction is freely reversible in vitro, the physiological reaction seems to be sucrose cleavage. Unlike characterized plant enzymes prefers ADP as a cosubstrate, whereas plants prefer UDP. The KM for sucrose is 8-fold lower in the presence of ADP than UDP. Its preference for ADP over UDP suggests it may directly link sucrose and glycogen metabolism. The protein is Sucrose synthase (ss2) of Nitrosomonas europaea (strain ATCC 19718 / CIP 103999 / KCTC 2705 / NBRC 14298).